A 253-amino-acid polypeptide reads, in one-letter code: Ribosomal RNA small subunit methyltransferase G (253 aa).

S-adenosyl-L-methionine contacts are provided by residues G84, L89, I136 to E137, and R155.

The protein belongs to the methyltransferase superfamily. RNA methyltransferase RsmG family.

The protein localises to the cytoplasm. Specifically methylates the N7 position of a guanine in 16S rRNA. The sequence is that of Ribosomal RNA small subunit methyltransferase G from Prochlorococcus marinus (strain SARG / CCMP1375 / SS120).